Here is a 417-residue protein sequence, read N- to C-terminus: UDP-N-acetylglucosamine 1-carboxyvinyltransferase (417 aa).

22–23 is a phosphoenolpyruvate binding site; the sequence is KN. R92 contributes to the UDP-N-acetyl-alpha-D-glucosamine binding site. C116 serves as the catalytic Proton donor. A 2-(S-cysteinyl)pyruvic acid O-phosphothioketal modification is found at C116. UDP-N-acetyl-alpha-D-glucosamine contacts are provided by D304 and I326.

Belongs to the EPSP synthase family. MurA subfamily.

The protein localises to the cytoplasm. The enzyme catalyses phosphoenolpyruvate + UDP-N-acetyl-alpha-D-glucosamine = UDP-N-acetyl-3-O-(1-carboxyvinyl)-alpha-D-glucosamine + phosphate. The protein operates within cell wall biogenesis; peptidoglycan biosynthesis. In terms of biological role, cell wall formation. Adds enolpyruvyl to UDP-N-acetylglucosamine. The sequence is that of UDP-N-acetylglucosamine 1-carboxyvinyltransferase from Geotalea daltonii (strain DSM 22248 / JCM 15807 / FRC-32) (Geobacter daltonii).